We begin with the raw amino-acid sequence, 287 residues long: Flagellin (287 aa).

This sequence belongs to the bacterial flagellin family.

It localises to the secreted. It is found in the bacterial flagellum. Its function is as follows. Flagellin is the subunit protein which polymerizes to form the filaments of bacterial flagella. The chain is Flagellin (flaA) from Listeria monocytogenes serovar 1/2a (strain ATCC BAA-679 / EGD-e).